The following is a 487-amino-acid chain: DNA polymerase delta small subunit (487 aa).

M1 is subject to N-acetylmethionine. S20 carries the post-translational modification Phosphoserine.

Belongs to the DNA polymerase delta/II small subunit family. As to quaternary structure, DNA polymerase delta is a heterotrimer of POL3, POL32 and HYS2.

It localises to the nucleus. It carries out the reaction DNA(n) + a 2'-deoxyribonucleoside 5'-triphosphate = DNA(n+1) + diphosphate. Its function is as follows. DNA polymerase delta (DNA polymerase III) participates in chromosomal DNA replication. It is required during synthesis of the leading and lagging DNA strands at the replication fork and binds at/or near replication origins and moves along DNA with the replication fork. It has 3'-5' proofreading exonuclease activity that correct errors arising during DNA replication. It is also involved in DNA synthesis during DNA repair. The protein is DNA polymerase delta small subunit (POL31) of Saccharomyces cerevisiae (strain ATCC 204508 / S288c) (Baker's yeast).